A 327-amino-acid polypeptide reads, in one-letter code: GTP 3',8-cyclase (327 aa).

Residues 4–226 form the Radical SAM core domain; sequence AFARDIHYLR…LRLGDHPGIR (223 aa). Arginine 13 contributes to the GTP binding site. Residues cysteine 20 and cysteine 24 each contribute to the [4Fe-4S] cluster site. Tyrosine 26 lines the S-adenosyl-L-methionine pocket. Cysteine 27 lines the [4Fe-4S] cluster pocket. A GTP-binding site is contributed by arginine 63. Glycine 67 is a binding site for S-adenosyl-L-methionine. A GTP-binding site is contributed by threonine 94. Serine 118 contributes to the S-adenosyl-L-methionine binding site. Lysine 155 contributes to the GTP binding site. Methionine 189 lines the S-adenosyl-L-methionine pocket. [4Fe-4S] cluster contacts are provided by cysteine 254 and cysteine 257. 259–261 is a binding site for GTP; the sequence is RLR. Cysteine 271 contributes to the [4Fe-4S] cluster binding site.

The protein belongs to the radical SAM superfamily. MoaA family. As to quaternary structure, monomer and homodimer. It depends on [4Fe-4S] cluster as a cofactor.

It catalyses the reaction GTP + AH2 + S-adenosyl-L-methionine = (8S)-3',8-cyclo-7,8-dihydroguanosine 5'-triphosphate + 5'-deoxyadenosine + L-methionine + A + H(+). Its pathway is cofactor biosynthesis; molybdopterin biosynthesis. Functionally, catalyzes the cyclization of GTP to (8S)-3',8-cyclo-7,8-dihydroguanosine 5'-triphosphate. This chain is GTP 3',8-cyclase, found in Heliobacterium modesticaldum (strain ATCC 51547 / Ice1).